The primary structure comprises 352 residues: Nicotinate-nucleotide--dimethylbenzimidazole phosphoribosyltransferase (352 aa).

Glu-318 (proton acceptor) is an active-site residue.

Belongs to the CobT family.

The enzyme catalyses 5,6-dimethylbenzimidazole + nicotinate beta-D-ribonucleotide = alpha-ribazole 5'-phosphate + nicotinate + H(+). The protein operates within nucleoside biosynthesis; alpha-ribazole biosynthesis; alpha-ribazole from 5,6-dimethylbenzimidazole: step 1/2. Catalyzes the synthesis of alpha-ribazole-5'-phosphate from nicotinate mononucleotide (NAMN) and 5,6-dimethylbenzimidazole (DMB). This Dehalococcoides mccartyi (strain CBDB1) protein is Nicotinate-nucleotide--dimethylbenzimidazole phosphoribosyltransferase.